A 366-amino-acid polypeptide reads, in one-letter code: Protein sigma-NS (366 aa).

Positions 1–11 (MASSLRAAISK) are important for ssRNA-binding and formation of complexes.

Belongs to the orthoreovirus sigma-NS protein family. As to quaternary structure, homooligomer; in presence of RNA. Interacts with protein mu-NS; this interaction allows the localization of sigma-NS to the viral factories. Interacts with host G3BP1 (via C-terminus); this interaction induces the relocalization of G3BP1 and other SG proteins to the viral factories periphery.

It localises to the host cytoplasm. Protein that binds to ssRNA and participates with protein mu-NS in forming the matrix of viral factories, which are large inclusions in the host cytoplasm where replication intermediates are assembled and viral RNA replication takes place. Plays a role in the inhibition of the integrated stress response (ISR) to escape from host cell translational shutoff. Participates in the disruption of stress granules (SG) through its association with host G3BP1 and mu-NS. The chain is Protein sigma-NS (S3) from Mammalia (T1L).